The primary structure comprises 323 residues: Phosphatidylethanolamine:ceramide ethanolaminephosphotransferase (323 aa).

Over 1 to 26 the chain is Cytoplasmic; sequence MAVPPVEMYSGSFWNRMRKPLPLRTQ. A helical membrane pass occupies residues 27–47; that stretch reads VIRFTVVFVIVSFILVVALQI. The Extracellular portion of the chain corresponds to 48–74; sequence THERMPDPKVTKPLPDLGFELLTKVPG. Residues 75–95 traverse the membrane as a helical segment; sequence MYVLADCCIGFLNILSVFTAF. Topologically, residues 96–147 are cytoplasmic; the sequence is KLYLLHRHCVGSGEPELPCNIPGVSRFFLSVWLCKENCRIELRNIHTIAWIR. The chain crosses the membrane as a helical span at residues 148 to 168; it reads FITSYALLLLSRSIIMVVTSL. Residues 169–187 are Extracellular-facing; that stretch reads PNPDDLCQNPPKIENRVKD. A helical transmembrane segment spans residues 188 to 208; that stretch reads ILLTVLTAGAGSIHCGDLMYS. At 209 to 233 the chain is on the cytoplasmic side; that stretch reads GHTVILTLHLMFHWIYGAMVHWSFR. The helical transmembrane segment at 234–254 threads the bilayer; that stretch reads PVVTVVAIFGYYCIVASRFHY. At 255-257 the chain is on the extracellular side; the sequence is TDD. A helical membrane pass occupies residues 258-278; it reads VLVAIYLTIATFIAVGHNADG. Residues 279 to 323 are Cytoplasmic-facing; that stretch reads APWQLQLFIRWWPCCGANSREVAEDGVPVAIVIKNEEMMNFEGKS.

It belongs to the sphingomyelin synthase family.

It is found in the membrane. It carries out the reaction an N-acylsphing-4-enine + a 1,2-diacyl-sn-glycero-3-phosphoethanolamine = an N-acylsphing-4-enine 1-phosphoethanolamine + a 1,2-diacyl-sn-glycerol. It catalyses the reaction an N-acylsphinganine + a 1,2-diacyl-sn-glycero-3-phosphoethanolamine = an N-acylsphinganine-1-phosphoethanolamine + a 1,2-diacyl-sn-glycerol. Its function is as follows. Predominantly synthesizes ethanolamine-phosphorylceramide (EPC), with minimal sphingomyelin (SM)/inositol phosphorylceramide (IPC) synthase activity. Specificity is likely to be defined by residues in the lumenal catalytic domain that interact with the polar head groups of the phospholipid donors. EPC is synthesized by both stages of the parasite life cycle, bloodstream forms (BSF) and procyclic forms (PCF), by transferring the phosphoethanolamine from a 1,2-diacyl-sn-glycero-3-phosphoethanolamine to an N-acylsphing-4-enine (ceramide) or an N-acylsphinganine (dihydroceramide). Similarly, SM is synthesized by transferring the phosphocholine from a 1,2-diacyl-sn-glycero-3-phosphocholine to ceramide or dihydroceramide by BSF and PCF, while IPC is confined to PCF. The ceramide/dihydroceramide ratios are skewed towards dihydroceramide in PCF parasites and ceramide in BSF parasites, this is likely due to differential expression and/or regulation of dihydroceramide desaturase, the enzyme responsible for converting dihydroceramide to ceramide. The polypeptide is Phosphatidylethanolamine:ceramide ethanolaminephosphotransferase (Trypanosoma brucei brucei).